We begin with the raw amino-acid sequence, 81 residues long: YcgL domain-containing protein Tgr7_3126 (81 aa).

The YcgL domain maps to 1–81 (MQVYVYKSRR…QMPPQNERPL (81 aa)).

The sequence is that of YcgL domain-containing protein Tgr7_3126 from Thioalkalivibrio sulfidiphilus (strain HL-EbGR7).